The following is an 893-amino-acid chain: DNA endonuclease RBBP8 (893 aa).

The tract at residues 22-45 (ELWTKLKEYHDKEVQGLQVKVTKL) is essential for binding to the MRN complex and for RPA focus formation on DNA damage. The stretch at 35–84 (VQGLQVKVTKLKKERILDAQRLEEFFTKNQQLRDQQKVLQETIKILEDRL) forms a coiled coil. Residues 45-160 (LKKERILDAQ…AELACEENII (116 aa)) are required for interaction with LMO4, probably by stabilizing the interaction through RPPB8 dimerization. Residues Lys62 and Lys115 each participate in a glycyl lysine isopeptide (Lys-Gly) (interchain with G-Cter in SUMO2) cross-link. Positions 117 to 138 (ITELMNEKNTLQEENKKLSEQL) form a coiled coil. A Glycyl lysine isopeptide (Lys-Gly) (interchain with G-Cter in SUMO2) cross-link involves residue Lys193. A phosphoserine mark is found at Ser233 and Ser276. The span at 296–307 (MESARSKEDSLR) shows a compositional bias: basic and acidic residues. Positions 296–324 (MESARSKEDSLRFSDSASKTPPQEFTTRA) are disordered. Residues 308–324 (FSDSASKTPPQEFTTRA) are compositionally biased toward polar residues. Position 315 is a phosphothreonine (Thr315). A phosphoserine mark is found at Ser325, Ser326, and Ser348. Residues Lys359 and Lys377 each participate in a glycyl lysine isopeptide (Lys-Gly) (interchain with G-Cter in SUMO2) cross-link. Ser378 is subject to Phosphoserine. Glycyl lysine isopeptide (Lys-Gly) (interchain with G-Cter in SUMO2) cross-links involve residues Lys394, Lys403, Lys409, and Lys437. A PXDLS motif motif is present at residues 489–493 (PLDLS). The segment at 508–556 (NETSKNKLKQATIYEALKPIPKGSSSGRKALSGDCMPAKDSWETYCLQP) is damage-recruitment motif. Lys525 is covalently cross-linked (Glycyl lysine isopeptide (Lys-Gly) (interchain with G-Cter in SUMO2); alternate). Residues Lys529, Lys570, and Lys576 each participate in a glycyl lysine isopeptide (Lys-Gly) (interchain with G-Cter in SUMO2) cross-link. A Glycyl lysine isopeptide (Lys-Gly) (interchain with G-Cter in SUMO2); alternate cross-link involves residue Lys602. Residues Lys611, Lys636, and Lys638 each participate in a glycyl lysine isopeptide (Lys-Gly) (interchain with G-Cter in SUMO2) cross-link. Positions 639–683 (ALPSNQDTSFENIQWSVDPGADLSQYKMDVTVIDTKDSSHSRLGG) are required for interaction with LMO4, probably by making physical contact with LMO4. Residue Ser662 is modified to Phosphoserine; by ATM. Lys674 is covalently cross-linked (Glycyl lysine isopeptide (Lys-Gly) (interchain with G-Cter in SUMO2)). Ser677 carries the phosphoserine modification. A Glycyl lysine isopeptide (Lys-Gly) (interchain with G-Cter in SUMO2) cross-link involves residue Lys716. Ser720 is subject to Phosphoserine. Ser742 is modified (phosphoserine; by ATM). Lys778 is covalently cross-linked (Glycyl lysine isopeptide (Lys-Gly) (interchain with G-Cter in SUMO2)). A KLHL15-binding motif is present at residues 836 to 838 (FRY). Phosphothreonine is present on residues Thr843 and Thr855. Lys865 participates in a covalent cross-link: Glycyl lysine isopeptide (Lys-Gly) (interchain with G-Cter in SUMO2). The segment at 869–893 (DLSPRPKRRQPYNAVFSPKGKEQRT) is disordered.

Belongs to the COM1/SAE2/CtIP family. In terms of assembly, homotetramer; formed by antiparallel association of helical extensions protruding from the N-termini of two parallel coiled-coil dimers. Forms a dumbbell-shaped particle in which polar globular domains are held about 30 nm apart by a central rod. Homotetramerization is required for DNA-end resection and repair. Interacts (via the PXDLS motif) with CTBP1; the interaction is disrupted via binding of the adenovirus E1A to CTBP1. Component of the BRCA1-RBBP8 complex. Interacts (the Ser-326 phosphorylated form) with BRCA1 (via the C-terminal BRCT domains): the interaction occurs in the G2 phase, ubiquitinates RBBP8 and involves RBBP8 in BRCA1-dependent G2/M checkpoint control on DNA damage. Interacts with RB1. Interacts with the MRN complex. Interacts directly with MRE11; the interaction is required for efficient homologous recombination (HR) and regulation of the MRN complex. Interacts (when phosphorylated by CDK1) with NBN; promoting association with the MRN complex. Interacts with LMO4 (via the LIM zinc-binding 1 domain). Interacts with SIAH1. Interacts with RNF138. Interacts with EXD2. Interacts with CUL3 and KLHL15; this interaction leads to RBBP8 proteasomal degradation. Directly interacts with PIN1; this interaction depends upon RBBP8 phosphorylation, predominantly at Thr-315. Interacts with FZR1; this interaction leads to APC/C-mediated RBBP8 proteasomal degradation. Interacts with AUNIP; leading to recruit RBBP8 to sites of DNA damage. Interacts with SAMHD1. Interacts with HDGFL2. In terms of processing, hyperphosphorylation upon ionizing radiation results in dissociation from BRCA1. Phosphorylation at Thr-843 by CDK1 is essential for the recruitment to DNA and the DNA repair function. Phosphorylation at Thr-843 and Thr-855 promote interaction with NBN and recruitment to double-strand breaks (DSBs). Phosphorylated on Ser-326 as cells enter G2 phase. Phosphorylated at Ser-326 as cells enter G2 phase. This phosphorylation is required for binding BRCA1 and for the G2/M DNA damage transition checkpoint control. Phosphorylation at Thr-315 is required for PIN1-binding, while phosphorylation at Ser-276 serves as a PIN1 isomerization site. Phosphorylation at Thr-315 is cell-cycle dependent. It steadily increases during S phase, peaks at late S/G2 phase, and drops at G1. Phosphorylation is not required for tetramerization. Binds to DNA more strongly when dephosphorylated. Ubiquitinated. Ubiquitination at multiple sites by BRCA1 (via its N-terminal RING domain) does not lead to its proteasomal degradation but instead the ubiquitinated RBBP8 binds to chromatin following DNA damage and may play a role in G2/M checkpoint control. Ubiquitinated by RNF138 at its N-terminus. Ubiquitinated through 'Lys-48' by the E3 CUL3-KLHL15 complex; this modification leads to proteasomal degradation. Ubiquitinated by the E3 FZR1/APC/C complex; this modification leads to proteasomal degradation.

The protein localises to the nucleus. It localises to the chromosome. Its function is as follows. Endonuclease that cooperates with the MRE11-RAD50-NBN (MRN) complex in DNA-end resection, the first step of double-strand break (DSB) repair through the homologous recombination (HR) pathway. HR is restricted to S and G2 phases of the cell cycle and preferentially repairs DSBs resulting from replication fork collapse. Key determinant of DSB repair pathway choice, as it commits cells to HR by preventing classical non-homologous end-joining (NHEJ). Specifically promotes the endonuclease activity of the MRN complex to clear DNA ends containing protein adducts: recruited to DSBs by NBN following phosphorylation by CDK1, and promotes the endonuclease activity of MRE11 to clear protein-DNA adducts and generate clean double-strand break ends. Functions downstream of the MRN complex and ATM, promotes ATR activation and its recruitment to DSBs in the S/G2 phase facilitating the generation of ssDNA. Component of the BRCA1-RBBP8 complex that regulates CHEK1 activation and controls cell cycle G2/M checkpoints on DNA damage. During immunoglobulin heavy chain class-switch recombination, promotes microhomology-mediated alternative end joining (A-NHEJ) and plays an essential role in chromosomal translocations. Binds preferentially to DNA Y-junctions and to DNA substrates with blocked ends and promotes intermolecular DNA bridging. The polypeptide is DNA endonuclease RBBP8 (Rbbp8) (Mus musculus (Mouse)).